The primary structure comprises 333 residues: Biotin synthase (333 aa).

The Radical SAM core domain occupies 47–276 (YYGKKVKLNM…TKEIRISGGR (230 aa)). The [4Fe-4S] cluster site is built by C65, C69, and C72. 4 residues coordinate [2Fe-2S] cluster: C109, C141, C201, and R271.

Belongs to the radical SAM superfamily. Biotin synthase family. Homodimer. [4Fe-4S] cluster serves as cofactor. The cofactor is [2Fe-2S] cluster.

The catalysed reaction is (4R,5S)-dethiobiotin + (sulfur carrier)-SH + 2 reduced [2Fe-2S]-[ferredoxin] + 2 S-adenosyl-L-methionine = (sulfur carrier)-H + biotin + 2 5'-deoxyadenosine + 2 L-methionine + 2 oxidized [2Fe-2S]-[ferredoxin]. The protein operates within cofactor biosynthesis; biotin biosynthesis; biotin from 7,8-diaminononanoate: step 2/2. Catalyzes the conversion of dethiobiotin (DTB) to biotin by the insertion of a sulfur atom into dethiobiotin via a radical-based mechanism. The protein is Biotin synthase of Bacillus licheniformis (strain ATCC 14580 / DSM 13 / JCM 2505 / CCUG 7422 / NBRC 12200 / NCIMB 9375 / NCTC 10341 / NRRL NRS-1264 / Gibson 46).